A 304-amino-acid polypeptide reads, in one-letter code: Putative F-box/LRR-repeat protein 21 (304 aa).

Positions 43–90 constitute an F-box domain; that stretch reads RRNWVDLPPELTTSILLRLSLTDILDNAQKVCKEWRRICKDPSMWRKI. LRR repeat units follow at residues 132–159, 173–198, 218–241, and 243–268; these read LSYITDRNLRSLGLGMCFPRVTKLGVVN, THSCIKLDLKAIGHACPQLKTLKLNS, GPLECDDDALAIAESMPKLHHLQL, and ANRLTNTGLNAILDGCPHLEHLDVRK.

This chain is Putative F-box/LRR-repeat protein 21 (FBL21), found in Arabidopsis thaliana (Mouse-ear cress).